Reading from the N-terminus, the 162-residue chain is NADH-quinone oxidoreductase subunit I (162 aa).

4Fe-4S ferredoxin-type domains follow at residues 53–83 and 93–122; these read LRRY…IEAE and TRYD…EGPN. 8 residues coordinate [4Fe-4S] cluster: C63, C66, C69, C73, C102, C105, C108, and C112.

Belongs to the complex I 23 kDa subunit family. NDH-1 is composed of 14 different subunits. Subunits NuoA, H, J, K, L, M, N constitute the membrane sector of the complex. It depends on [4Fe-4S] cluster as a cofactor.

The protein resides in the cell inner membrane. It catalyses the reaction a quinone + NADH + 5 H(+)(in) = a quinol + NAD(+) + 4 H(+)(out). Functionally, NDH-1 shuttles electrons from NADH, via FMN and iron-sulfur (Fe-S) centers, to quinones in the respiratory chain. The immediate electron acceptor for the enzyme in this species is believed to be ubiquinone. Couples the redox reaction to proton translocation (for every two electrons transferred, four hydrogen ions are translocated across the cytoplasmic membrane), and thus conserves the redox energy in a proton gradient. The sequence is that of NADH-quinone oxidoreductase subunit I from Granulibacter bethesdensis (strain ATCC BAA-1260 / CGDNIH1).